The sequence spans 396 residues: MSLPFSQDERDLAAGGILTIDLAALRHNYSAIATRIAPTRTAAVVKADAYGLGASRVAPAFYEAGCRDFFVAHLGEAVALKPFLKPDATLYVLNGLQPGTQAACAREGILPVLNSLEQVENWAALATRLGKKLPALLQFDTGMSRLGLSAKEFDRLLENVTLLSRIDIKFAISHLANGDEPGNAANARQLAKMTALLARLPKLPAALANSGGTFLGKTYYFDLARPGIALYGIDPERQHDFSDKVAHENKKPKHSILPVLTLSARVIQVRDVDKGATVGYGGTYVANGPMRIATIAVGYADGLFRSLSNKGAAFFGDTRLPIIGRVSMDSITLDVTSLPEGTLKLGSLVELIGPHQRLEDVARDCDTIPYEILTALGNRYARVYVYVNGGGTSTTA.

Lys46 acts as the Proton acceptor; specific for D-alanine in catalysis. Lys46 bears the N6-(pyridoxal phosphate)lysine mark. Arg145 is a binding site for substrate. Catalysis depends on Tyr280, which acts as the Proton acceptor; specific for L-alanine. Met328 is a substrate binding site.

It belongs to the alanine racemase family. It depends on pyridoxal 5'-phosphate as a cofactor.

It carries out the reaction L-alanine = D-alanine. The protein operates within amino-acid biosynthesis; D-alanine biosynthesis; D-alanine from L-alanine: step 1/1. In terms of biological role, catalyzes the interconversion of L-alanine and D-alanine. May also act on other amino acids. The protein is Alanine racemase (alr) of Brucella suis (strain ATCC 23445 / NCTC 10510).